The sequence spans 385 residues: Zinc finger protein B385R (385 aa).

2 C2H2-type zinc fingers span residues 166-190 and 168-190; these read LQCP…FYNH and CPNC…FYNH.

Belongs to the asfivirus B385R family.

The polypeptide is Zinc finger protein B385R (African swine fever virus (isolate Tick/Malawi/Lil 20-1/1983) (ASFV)).